The chain runs to 224 residues: Polysialic acid transport ATP-binding protein KpsT (224 aa).

Residues 2–223 (IKIENLTKSY…EYKMYQDLDI (222 aa)) form the ABC transporter domain. 38–45 (GRNGAGKS) serves as a coordination point for ATP.

The protein belongs to the ABC transporter superfamily.

The protein localises to the cell inner membrane. Functionally, putative ATP-binding protein, and an energy coupling component for the transport of polysialic acid across the cytoplasmic membrane. The protein is Polysialic acid transport ATP-binding protein KpsT (kpsT) of Escherichia coli.